Consider the following 403-residue polypeptide: Acetate kinase (403 aa).

Asn7 contributes to the Mg(2+) binding site. Lys14 serves as a coordination point for ATP. Arg90 is a binding site for substrate. Asp147 serves as the catalytic Proton donor/acceptor. ATP-binding positions include His207–Gly211, Asp283–Arg285, and Gly331–Asn335. Position 386 (Glu386) interacts with Mg(2+).

It belongs to the acetokinase family. As to quaternary structure, homodimer. Requires Mg(2+) as cofactor. Mn(2+) serves as cofactor.

The protein localises to the cytoplasm. The enzyme catalyses acetate + ATP = acetyl phosphate + ADP. It participates in metabolic intermediate biosynthesis; acetyl-CoA biosynthesis; acetyl-CoA from acetate: step 1/2. Its function is as follows. Catalyzes the formation of acetyl phosphate from acetate and ATP. Can also catalyze the reverse reaction. The protein is Acetate kinase of Thermotoga sp. (strain RQ2).